The chain runs to 248 residues: Serine/arginine-rich splicing factor 1 (248 aa).

S2 bears the N-acetylserine mark. S2 carries the post-translational modification Phosphoserine. The region spanning 16-91 (CRIYVGNLPP…YRLRVEFPRS (76 aa)) is the RRM 1 domain. A Glycyl lysine isopeptide (Lys-Gly) (interchain with G-Cter in SUMO2) cross-link involves residue K30. Position 38 is an N6-acetyllysine; alternate (K38). K38 participates in a covalent cross-link: Glycyl lysine isopeptide (Lys-Gly) (interchain with G-Cter in SUMO2); alternate. Positions 88–134 (FPRSGRGTGRGGGGGGGGGAPRGRYGPPSRRSENRVVVSGLPPSGSW) are disordered. R93, R97, and R109 each carry asymmetric dimethylarginine; alternate. Omega-N-methylarginine; alternate occurs at positions 93, 97, and 109. Residues 93–108 (RGTGRGGGGGGGGGAP) are compositionally biased toward gly residues. The residue at position 111 (R111) is an Omega-N-methylarginine. An RRM 2 domain is found at 121-195 (NRVVVSGLPP…ETAYIRVKVD (75 aa)). S133 carries the phosphoserine modification. The residue at position 179 (K179) is an N6-acetyllysine. The disordered stretch occupies residues 191–248 (RVKVDGPRSPSYGRSRSRSRSRSRSRSRSNSRSRSYSPRRSRGSPRYSPRHSRSRSRT). The interaction with SAFB1 stretch occupies residues 198–247 (RSPSYGRSRSRSRSRSRSRSRSNSRSRSYSPRRSRGSPRYSPRHSRSRSR). Residues S199 and S201 each carry the phosphoserine modification. Residue Y202 is modified to Phosphotyrosine. Phosphoserine is present on residues S205, S207, S209, S231, S234, and S238. A compositionally biased stretch (basic residues) spans 205-248 (SRSRSRSRSRSRSRSNSRSRSYSPRRSRGSPRYSPRHSRSRSRT).

It belongs to the splicing factor SR family. As to quaternary structure, consists of two polypeptides of p32 and p33. Identified in the spliceosome C complex. Component of a ribonucleoprotein complex containing mRNAs and RNA-binding proteins including DDX5, HNRNPH2 and SRSF1 as well as splicing regulator ARVCF. In vitro, self-associates and binds SRSF2, SNRNP70 and U2AF1 but not U2AF2. Binds SREK1/SFRS12. Interacts with SAFB/SAFB1. Interacts with PSIP1/LEDGF. Interacts with RSRC1 (via Arg/Ser-rich domain). Interacts with ZRSR2/U2AF1-RS2. Interacts with CCDC55 (via C-terminus). Interacts with SRPK1 and a sliding docking interaction is essential for its sequential and processive phosphorylation by SRPK1. Interacts with NXF1. Interacts with CCNL1, CCNL2 and CDK11B. Interacts with RRP1B. Interacts (when phosphorylated in its RS domain) with TNPO3; promoting nuclear import. Interacts with ILDR1 (via C-terminus) and ILDR2. Post-translationally, phosphorylated by CLK1, CLK2, CLK3 and CLK4. Phosphorylated by SRPK1 at multiple serines in its RS domain via a directional (C-terminal to N-terminal) and a dual-track mechanism incorporating both processive phosphorylation (in which the kinase stays attached to the substrate after each round of phosphorylation) and distributive phosphorylation steps (in which the kinase and substrate dissociate after each phosphorylation event). The RS domain of SRSF1 binds to a docking groove in the large lobe of the kinase domain of SRPK1 and this induces certain structural changes in SRPK1 and/or RRM 2 domain of SRSF1, allowing RRM 2 to bind the kinase and initiate phosphorylation. The cycles continue for several phosphorylation steps in a processive manner (steps 1-8) until the last few phosphorylation steps (approximately steps 9-12). During that time, a mechanical stress induces the unfolding of the beta-4 motif in RRM 2, which then docks at the docking groove of SRPK1. This also signals RRM 2 to begin to dissociate, which facilitates SRSF1 dissociation after phosphorylation is completed. Asymmetrically dimethylated at arginines, probably by PRMT1, methylation promotes localization to nuclear speckles.

It localises to the cytoplasm. The protein resides in the nucleus speckle. In terms of biological role, plays a role in preventing exon skipping, ensuring the accuracy of splicing and regulating alternative splicing. Interacts with other spliceosomal components, via the RS domains, to form a bridge between the 5'- and 3'-splice site binding components, U1 snRNP and U2AF. Can stimulate binding of U1 snRNP to a 5'-splice site-containing pre-mRNA. Binds to purine-rich RNA sequences, either the octamer, 5'-RGAAGAAC-3' (r=A or G) or the decamers, AGGACAGAGC/AGGACGAAGC. Binds preferentially to the 5'-CGAGGCG-3' motif in vitro. Three copies of the octamer constitute a powerful splicing enhancer in vitro, the ASF/SF2 splicing enhancer (ASE) which can specifically activate ASE-dependent splicing. May function as export adapter involved in mRNA nuclear export through the TAP/NXF1 pathway. This Bos taurus (Bovine) protein is Serine/arginine-rich splicing factor 1 (SRSF1).